Here is a 556-residue protein sequence, read N- to C-terminus: Protein misato homolog 1 (556 aa).

Residue serine 41 is modified to Phosphoserine.

Belongs to the misato family.

Its subcellular location is the mitochondrion outer membrane. The protein localises to the cytoplasm. In terms of biological role, involved in the regulation of mitochondrial distribution and morphology. Required for mitochondrial fusion and mitochondrial network formation. This is Protein misato homolog 1 (Msto1) from Mus musculus (Mouse).